A 334-amino-acid polypeptide reads, in one-letter code: MEVQRVQEIASLSKVIDTIPAEYIRSENEQPVISTVHGVVLEVPVIDLSDSDEKKIVGLVSEASKEWGIFQVVNHGIPNEVIRKLQEVGKHFFELPQEEKELIAKPEGSQSIEGYGTRLQKEVDGKKGWVDHLFHKIWPPSAINYQFWPKNPPAYREANEEYAKRLQLVVDNLFKYLSLGLDLEPNSFKDGAGGDDLVYLMKINYYPPCPRPDLALGVAHTDMSAITVLVPNEVPGLQVYKDGHWYDCKYIPNALIVHIGDQVEIMSNGKYKSVYHRTTVNKEKTRMSWPVFLEPPPDHEVGPIPKLVNEENPAKFKTKKYKDYAYCKLNKLPQ.

Positions 196 to 295 (DLVYLMKINY…RMSWPVFLEP (100 aa)) constitute a Fe2OG dioxygenase domain. Residues H220, D222, and H276 each coordinate Fe cation.

Belongs to the iron/ascorbate-dependent oxidoreductase family. It depends on Fe cation as a cofactor. Requires L-ascorbate as cofactor.

Its subcellular location is the cytoplasm. It catalyses the reaction a (2R,3R)-dihydroflavonol + 2-oxoglutarate + O2 = a flavonol + succinate + CO2 + H2O. It carries out the reaction a (2S)-flavan-4-one + 2-oxoglutarate + O2 = a (2R,3R)-dihydroflavonol + succinate + CO2. It participates in secondary metabolite biosynthesis; flavonoid biosynthesis. Functionally, catalyzes the formation of flavonols from dihydroflavonols. It can act on dihydrokaempferol to produce kaempferol, on dihydroquercetin to produce quercitin and on dihydromyricetin to produce myricetin. This Eustoma exaltatum subsp. russellianum (Bluebells) protein is Flavonol synthase/flavanone 3-hydroxylase (FLS).